The chain runs to 622 residues: MALLQISEPGMAPAPHQRRLAVGIDLGTTNSLVAAVRNSVPEVLPDDAGRVLLPSVVRYLENGGRRIGHDAKAQAATDPRNTIVSVKRFMGRGKAEVEGAANAPYEFVDAPGMVQIRTVDGVKSPVEVSAEILATLRQRAEDTLGDELVGAVITVPAYFDDAQRQATKDAARLAGLNVLRLLNEPTAAAIAYGLDNAAEGLYAVYDLGGGTFDLSILKLTKGVFEVLAAGGDSALGGDDFDHALFDHVLAQAGLDAKTLAPEDVRLLLDRVRVLKEALSSAPEAALDVTLSNGAHLAQTISHDTFATLVEPLVQRTLTPTRKALRDAQVTPADIKGVVLVGGATRMPVIREAVAKYFGQPPLVNLDPDQVVALGAAIQADLLAGNRGSGDDWLLLDVIPLSLGVETMGGLVEKIIPRNSTIPIARAQEFTTFKDGQTAMAIHVVQGERELVADCRSLARFELRGIPPMTAGAARIRVTYQVDADGLLSVFAREQHSGVEASVVVKPSYGLADDDIAKMLEDSFKTAEVDMRARALREAQVEAERMIEATQAALAADGELLDAVERAEIDARVAALRTIAQGDDADAIEAATKALADGTDEFAARRMDKSIKRALSGRRLDEI.

The protein belongs to the heat shock protein 70 family.

Functionally, chaperone involved in the maturation of iron-sulfur cluster-containing proteins. Has a low intrinsic ATPase activity which is markedly stimulated by HscB. The polypeptide is Chaperone protein HscA homolog (Burkholderia multivorans (strain ATCC 17616 / 249)).